We begin with the raw amino-acid sequence, 244 residues long: rRNA adenine N-6-methyltransferase (244 aa).

Residues asparagine 11, isoleucine 13, glycine 38, glutamate 59, aspartate 84, and serine 101 each coordinate S-adenosyl-L-methionine.

The protein belongs to the class I-like SAM-binding methyltransferase superfamily. rRNA adenine N(6)-methyltransferase family.

Its function is as follows. Involved in erythromycin resistance. This Lysinibacillus sphaericus (Bacillus sphaericus) protein is rRNA adenine N-6-methyltransferase (ermG).